A 429-amino-acid chain; its full sequence is Ribosomal RNA small subunit methyltransferase B (429 aa).

S-adenosyl-L-methionine is bound by residues 254 to 260 (CAAPGGK), Asp277, Asp303, and Asp322. Catalysis depends on Cys375, which acts as the Nucleophile.

It belongs to the class I-like SAM-binding methyltransferase superfamily. RsmB/NOP family.

It localises to the cytoplasm. The catalysed reaction is cytidine(967) in 16S rRNA + S-adenosyl-L-methionine = 5-methylcytidine(967) in 16S rRNA + S-adenosyl-L-homocysteine + H(+). Its function is as follows. Specifically methylates the cytosine at position 967 (m5C967) of 16S rRNA. This Erwinia tasmaniensis (strain DSM 17950 / CFBP 7177 / CIP 109463 / NCPPB 4357 / Et1/99) protein is Ribosomal RNA small subunit methyltransferase B.